A 284-amino-acid polypeptide reads, in one-letter code: uncharacterized protein (284 aa).

Q54 is an FMN binding site. C83 serves as the catalytic Proton donor. FMN contacts are provided by residues K125, H153, 183 to 185 (NGG), and 207 to 208 (AN).

It belongs to the Dus family. FMN is required as a cofactor.

In terms of biological role, catalyzes the synthesis of dihydrouridine, a modified base found in the D-loop of most tRNAs. This is an uncharacterized protein from Caenorhabditis elegans.